We begin with the raw amino-acid sequence, 517 residues long: NADH-quinone oxidoreductase subunit N (517 aa).

The next 14 helical transmembrane spans lie at 14–34, 40–60, 77–97, 131–151, 154–174, 189–209, 238–258, 272–292, 306–326, 334–354, 362–382, 404–424, 451–471, and 481–501; these read LAPTLILLGAALVGVLVEAFV, HMVQLTVAMLAVLSALTMVVV, GPALFLQGAILVLAAMALLLI, ATEVYPLTSFAVGGMLIFVAA, LLTMFIALEVLSLPLYLLCAL, YFLLGAYASAFFLFGVALVYG, VLLFGGMALIAIGLLFKAAAA, PTPITGFMAACTKVAAFGALL, FTPILGVVAVLTMLVGAVLAV, LLAYSSIANAGYLLVGVLAPS, MFYLVAYGFSVLAAFAVVTLV, FYAGLFTFILLAFAGIPLTSG, SMVLAFPYLRVVVLMWLSEPG, and GWLTSAALTIGVVATLVLGVV.

The protein belongs to the complex I subunit 2 family. As to quaternary structure, NDH-1 is composed of 14 different subunits. Subunits NuoA, H, J, K, L, M, N constitute the membrane sector of the complex.

Its subcellular location is the cell membrane. The catalysed reaction is a quinone + NADH + 5 H(+)(in) = a quinol + NAD(+) + 4 H(+)(out). NDH-1 shuttles electrons from NADH, via FMN and iron-sulfur (Fe-S) centers, to quinones in the respiratory chain. The immediate electron acceptor for the enzyme in this species is believed to be a menaquinone. Couples the redox reaction to proton translocation (for every two electrons transferred, four hydrogen ions are translocated across the cytoplasmic membrane), and thus conserves the redox energy in a proton gradient. This is NADH-quinone oxidoreductase subunit N from Salinispora arenicola (strain CNS-205).